Reading from the N-terminus, the 591-residue chain is L-fucose isomerase (591 aa).

Catalysis depends on proton acceptor residues E337 and D361. Mn(2+) is bound by residues E337, D361, and H528.

The protein belongs to the L-fucose isomerase family. Homohexamer. It depends on Mn(2+) as a cofactor.

The protein localises to the cytoplasm. It carries out the reaction L-fucose = L-fuculose. The catalysed reaction is D-arabinose = D-ribulose. The enzyme catalyses L-xylopyranose = L-xylulose. The protein operates within carbohydrate degradation; L-fucose degradation; L-lactaldehyde and glycerone phosphate from L-fucose: step 1/3. Inhibited by ribitol, L-arabitol and dulcitol. Isomerization of L-xylulose to L-xylose is inhibited by xylitol. Functionally, converts the aldose L-fucose into the corresponding ketose L-fuculose. Also converts D-arabinose into D-ribulose. In addition, catalyzes the isomerization of L-xylulose to L-xylose. This chain is L-fucose isomerase, found in Escherichia coli (strain K12).